The sequence spans 203 residues: Urease accessory protein UreG (203 aa).

Residue 11-18 (GPVGSGKT) participates in GTP binding.

This sequence belongs to the SIMIBI class G3E GTPase family. UreG subfamily. In terms of assembly, homodimer. UreD, UreF and UreG form a complex that acts as a GTP-hydrolysis-dependent molecular chaperone, activating the urease apoprotein by helping to assemble the nickel containing metallocenter of UreC. The UreE protein probably delivers the nickel.

The protein resides in the cytoplasm. Functionally, facilitates the functional incorporation of the urease nickel metallocenter. This process requires GTP hydrolysis, probably effectuated by UreG. This Prochlorococcus marinus (strain MIT 9301) protein is Urease accessory protein UreG.